Reading from the N-terminus, the 719-residue chain is NF-kappa-B inhibitor zeta (719 aa).

The segment covering 46 to 81 (GACDGGCSASGPSAPGSPGSDSSDFSSASSVSSCGA) has biased composition (low complexity). Positions 46-97 (GACDGGCSASGPSAPGSPGSDSSDFSSASSVSSCGAVESRPRGGARAERLQV) are disordered. The span at 84–97 (SRPRGGARAERLQV) shows a compositional bias: basic and acidic residues. An OCA domain is found at 108-130 (RGPFQGVRVKNSVKELLLHIRSH). Positions 164 to 179 (KRKGSDSLSDGPACKR) match the Nuclear localization signal motif. Disordered stretches follow at residues 188–210 (LTPPQTPTPAESMEDVHHNESKQ) and 289–343 (YSPQ…FAPL). A compositionally biased stretch (basic and acidic residues) spans 201 to 210 (EDVHHNESKQ). The required for transcriptional activity stretch occupies residues 322-394 (SYEPHLFGRE…LARPDASSTP (73 aa)). The segment at 405-719 (GGNPMSTTQL…KSIQQRAPPY (315 aa)) is interaction with NFKB1/p50. ANK repeat units follow at residues 444-473 (DGDTFLHIAVAQGRRALSYVLARKMNALHM), 480-509 (NGQSAFQVAVAANQHLIVQDLVTLGAQVNT), 513-542 (WGRTPLHVCAEKGHSQVLQAIQKGAAGSNQ), 552-581 (DGLTPLHCAVLAHNAVVHELQRNQQPHSPE), 583-608 (QELLLKNKSLVDTIKCLIQMGAAVEA), 613-642 (SGRTALHLAAEEANLELIRLFLELPSCLSF), and 649-682 (NGNTALHVAASLQYRVTQLDAVRLLMRKGADPST).

As to quaternary structure, interacts with NFKB1/p50. Interacts with RELA. Interacts with AKIRIN2.

It is found in the nucleus. Involved in regulation of NF-kappa-B transcription factor complexes. Inhibits NF-kappa-B activity without affecting its nuclear translocation upon stimulation. Inhibits DNA-binding of RELA and NFKB1/p50, and of the NF-kappa-B p65-p50 heterodimer and the NF-kappa-B p50-p50 homodimer. Also seems to activate NF-kappa-B-mediated transcription. In vitro, upon association with NFKB1/p50 has transcriptional activation activity and, together with NFKB1/p50 and RELA, is recruited to LCN2 promoters. Promotes transcription of LCN2 and DEFB4. Is recruited to IL-6 promoters and activates IL-6 but decreases TNF-alpha production in response to LPS. Seems to be involved in the induction of inflammatory genes activated through TLR/IL-1 receptor signaling. Involved in the induction of T helper 17 cells (Th17) differentiation upon recognition of antigen by T cell antigen receptor (TCR). The chain is NF-kappa-B inhibitor zeta (NFKBIZ) from Bos taurus (Bovine).